A 544-amino-acid polypeptide reads, in one-letter code: Chaperonin GroEL 1 (544 aa).

ATP is bound by residues threonine 29–proline 32, aspartate 86–threonine 90, glycine 413, asparagine 479–alanine 481, and aspartate 495.

It belongs to the chaperonin (HSP60) family. In terms of assembly, forms a cylinder of 14 subunits composed of two heptameric rings stacked back-to-back. Interacts with the co-chaperonin GroES.

It localises to the cytoplasm. It catalyses the reaction ATP + H2O + a folded polypeptide = ADP + phosphate + an unfolded polypeptide.. Functionally, together with its co-chaperonin GroES, plays an essential role in assisting protein folding. The GroEL-GroES system forms a nano-cage that allows encapsulation of the non-native substrate proteins and provides a physical environment optimized to promote and accelerate protein folding. The chain is Chaperonin GroEL 1 from Synechococcus sp. (strain CC9902).